Here is a 379-residue protein sequence, read N- to C-terminus: UDP-4-amino-4-deoxy-L-arabinose--oxoglutarate aminotransferase (379 aa).

The residue at position 182 (lysine 182) is an N6-(pyridoxal phosphate)lysine.

Belongs to the DegT/DnrJ/EryC1 family. ArnB subfamily. In terms of assembly, homodimer. The cofactor is pyridoxal 5'-phosphate.

The catalysed reaction is UDP-4-amino-4-deoxy-beta-L-arabinose + 2-oxoglutarate = UDP-beta-L-threo-pentopyranos-4-ulose + L-glutamate. The protein operates within nucleotide-sugar biosynthesis; UDP-4-deoxy-4-formamido-beta-L-arabinose biosynthesis; UDP-4-deoxy-4-formamido-beta-L-arabinose from UDP-alpha-D-glucuronate: step 2/3. Its pathway is bacterial outer membrane biogenesis; lipopolysaccharide biosynthesis. Functionally, catalyzes the conversion of UDP-4-keto-arabinose (UDP-Ara4O) to UDP-4-amino-4-deoxy-L-arabinose (UDP-L-Ara4N). The modified arabinose is attached to lipid A and is required for resistance to polymyxin and cationic antimicrobial peptides. This Escherichia coli O81 (strain ED1a) protein is UDP-4-amino-4-deoxy-L-arabinose--oxoglutarate aminotransferase.